The sequence spans 177 residues: Small ribosomal subunit protein uS5 (177 aa).

Residues 21–84 (LKEKMVSVNR…DEARQRMVRV (64 aa)) enclose the S5 DRBM domain.

The protein belongs to the universal ribosomal protein uS5 family. In terms of assembly, part of the 30S ribosomal subunit. Contacts proteins S4 and S8.

Its function is as follows. With S4 and S12 plays an important role in translational accuracy. Functionally, located at the back of the 30S subunit body where it stabilizes the conformation of the head with respect to the body. This chain is Small ribosomal subunit protein uS5, found in Nitrosomonas europaea (strain ATCC 19718 / CIP 103999 / KCTC 2705 / NBRC 14298).